The chain runs to 110 residues: Phosphoribosyl-ATP pyrophosphatase (110 aa).

This sequence belongs to the PRA-PH family.

It is found in the cytoplasm. It carries out the reaction 1-(5-phospho-beta-D-ribosyl)-ATP + H2O = 1-(5-phospho-beta-D-ribosyl)-5'-AMP + diphosphate + H(+). It functions in the pathway amino-acid biosynthesis; L-histidine biosynthesis; L-histidine from 5-phospho-alpha-D-ribose 1-diphosphate: step 2/9. This is Phosphoribosyl-ATP pyrophosphatase from Lacticaseibacillus casei (strain BL23) (Lactobacillus casei).